Consider the following 640-residue polypeptide: Probable potassium transport system protein Kup (640 aa).

12 consecutive transmembrane segments (helical) span residues 26–46 (IAGLAVAAVGVVYGDIGTSPL), 69–89 (ILSLVFWALVLVVSAKYVLFI), 117–137 (AWVLSALGVFGAALFYGDGMI), 155–175 (PAFRPYVLPIALAVLCGLFVI), 186–206 (IFGPVMLVWFVLLAVLGIAGI), 224–244 (FFADMPLVGWLSLGAVVLAIT), 265–285 (WFLVVFPSLYLNYLGQGALIL), 297–317 (LLVPDALVYPMVAMATLATII), 355–375 (IYVPSINWMLLGAVVALVVGF), 384–404 (AYGIAVTLTMMIDTLLAFVVV), 415–435 (AGLFLGVFLAVDVAFFSATTV), and 437–457 (ILAGGWFPLLVGALIFTLLTT).

The protein belongs to the HAK/KUP transporter (TC 2.A.72) family.

The protein localises to the cell inner membrane. It carries out the reaction K(+)(in) + H(+)(in) = K(+)(out) + H(+)(out). In terms of biological role, transport of potassium into the cell. Likely operates as a K(+):H(+) symporter. This is Probable potassium transport system protein Kup from Aromatoleum aromaticum (strain DSM 19018 / LMG 30748 / EbN1) (Azoarcus sp. (strain EbN1)).